The following is a 147-amino-acid chain: MTILCELESGVSLPEYATEGASGADLRANIKEPMAVLPGQRVLVPTGIKMQIPQGYEVQVRPRSGFALKHGIMVVNSPGTIDADYRGEVCIILANFGESTFIIEPKMRIAQAVVAPVVQAKFIAVDQEEGLTTTSRGSRGFGHTGEK.

Residues 63-65 (RSG), N76, and 80-82 (TID) contribute to the substrate site.

This sequence belongs to the dUTPase family. The cofactor is Mg(2+).

It catalyses the reaction dUTP + H2O = dUMP + diphosphate + H(+). The protein operates within pyrimidine metabolism; dUMP biosynthesis; dUMP from dCTP (dUTP route): step 2/2. Functionally, this enzyme is involved in nucleotide metabolism: it produces dUMP, the immediate precursor of thymidine nucleotides and it decreases the intracellular concentration of dUTP so that uracil cannot be incorporated into DNA. The protein is Deoxyuridine 5'-triphosphate nucleotidohydrolase of Chlamydia abortus (strain DSM 27085 / S26/3) (Chlamydophila abortus).